Reading from the N-terminus, the 438-residue chain is Transposon Ty2-C Gag polyprotein (438 aa).

3 stretches are compositionally biased toward polar residues: residues 1-11, 19-39, and 49-60; these read MESQQLHQNPR, ASVT…SASN, and KVNSQQETTPGT. 3 disordered regions span residues 1-88, 365-397, and 419-438; these read MESQ…YQQH, NVSR…AKAH, and SSQY…TERI. Residues 295 to 397 form an RNA-binding region; that stretch reads ENNINVSDRL…SSKPRAAKAH (103 aa). Positions 369 to 382 are enriched in low complexity; that stretch reads TSPNTTNTKVTTRN.

As to quaternary structure, homotrimer.

It is found in the cytoplasm. Capsid protein (CA) is the structural component of the virus-like particle (VLP), forming the shell that encapsulates the retrotransposons dimeric RNA genome. The particles are assembled from trimer-clustered units and there are holes in the capsid shells that allow for the diffusion of macromolecules. CA also has nucleocapsid-like chaperone activity, promoting primer tRNA(i)-Met annealing to the multipartite primer-binding site (PBS), dimerization of Ty2 RNA and initiation of reverse transcription. This is Transposon Ty2-C Gag polyprotein (TY2A-C) from Saccharomyces cerevisiae (strain ATCC 204508 / S288c) (Baker's yeast).